Here is a 489-residue protein sequence, read N- to C-terminus: Putative ATP-dependent RNA helicase T26G10.1 (489 aa).

The short motif at 44–72 is the Q motif element; sequence KSFAELGVSQPLCDACQRLGWMKPSKIQQ. The Helicase ATP-binding domain occupies 75–246; the sequence is LPHALQGKDV…RASLRDPARV (172 aa). 88–95 lines the ATP pocket; sequence AETGSGKT. Residues 194–197 carry the DEAD box motif; it reads DEAD. Residues 257–417 form the Helicase C-terminal domain; sequence NLKQHYIFVP…EYKCVENEVM (161 aa). Residues 433-489 form a disordered region; it reads EMKEMDEKKKSGKKRRQNDDFGDTEESGGRFKMGIKSMGGRGGSGGGRGGKKKKMSK. Positions 469-480 are enriched in gly residues; the sequence is SMGGRGGSGGGR.

It belongs to the DEAD box helicase family. DDX47/RRP3 subfamily.

It localises to the nucleus. It catalyses the reaction ATP + H2O = ADP + phosphate + H(+). Functionally, probable ATP-dependent RNA helicase which may be involved in ribosome biogenesis. This chain is Putative ATP-dependent RNA helicase T26G10.1, found in Caenorhabditis elegans.